Consider the following 252-residue polypeptide: ATP synthase subunit a (252 aa).

A run of 6 helical transmembrane segments spans residues 29–49 (FTNV…FLFI), 87–107 (FFPL…IGLF), 117–137 (IMIT…CGFY), 146–166 (LFVP…IEVI), 196–216 (FIVS…LPLI), and 219–239 (VAIT…FTVL).

This sequence belongs to the ATPase A chain family. As to quaternary structure, F-type ATPases have 2 components, CF(1) - the catalytic core - and CF(0) - the membrane proton channel. CF(1) has five subunits: alpha(3), beta(3), gamma(1), delta(1), epsilon(1). CF(0) has three main subunits: a(1), b(2) and c(9-12). The alpha and beta chains form an alternating ring which encloses part of the gamma chain. CF(1) is attached to CF(0) by a central stalk formed by the gamma and epsilon chains, while a peripheral stalk is formed by the delta and b chains.

It localises to the cell inner membrane. In terms of biological role, key component of the proton channel; it plays a direct role in the translocation of protons across the membrane. In Bartonella bacilliformis (strain ATCC 35685 / KC583 / Herrer 020/F12,63), this protein is ATP synthase subunit a.